The sequence spans 393 residues: Short-chain dehydrogenase/reductase family 42E member 1 (393 aa).

Y152 acts as the Proton acceptor in catalysis. An NAD(+)-binding site is contributed by K156. Transmembrane regions (helical) follow at residues 282–302 (LPLT…FILG) and 371–391 (GLLV…SVIL).

The protein belongs to the 3-beta-HSD family.

It is found in the membrane. The protein is Short-chain dehydrogenase/reductase family 42E member 1 (SDR42E1) of Macaca fascicularis (Crab-eating macaque).